The following is a 172-amino-acid chain: MWTVPVLFWVLGSVWFWDSAQGGTIGVNEDDIVTPGTGDGMVPPGIEDKITTTGATGGLNESTGKAPLVPTQRERGTKPPLEELSTSATSDHDHREHESTTTVKVVTSHSVDKKTSHPNRDNAGDETQTTDKKDGLPVVTLVGIIVGVLLAIGFVGGIFIVVMKKISGRFSP.

The signal sequence occupies residues 1 to 22 (MWTVPVLFWVLGSVWFWDSAQG). Residues 23-141 (GTIGVNEDDI…KKDGLPVVTL (119 aa)) are Extracellular-facing. Thr-37, Thr-51, Thr-52, Thr-53, and Thr-56 each carry an O-linked (GalNAc...) threonine glycan. The tract at residues 49-132 (KITTTGATGG…AGDETQTTDK (84 aa)) is disordered. Over residues 51-63 (TTTGATGGLNEST) the composition is skewed to polar residues. Asn-60 carries an N-linked (GlcNAc...) asparagine glycan. O-linked (GalNAc...) threonine glycosylation is found at Thr-63, Thr-71, and Thr-77. Positions 72 to 81 (QRERGTKPPL) are enriched in basic and acidic residues. Residue Ser-85 is glycosylated (O-linked (GalNAc...) serine). The O-linked (GalNAc...) threonine glycan is linked to Thr-86. Residue Ser-87 is glycosylated (O-linked (GalNAc...) serine). A glycan (O-linked (GalNAc...) threonine) is linked at Thr-89. Ser-90 is a glycosylation site (O-linked (GalNAc...) serine). The segment covering 90–99 (SDHDHREHES) has biased composition (basic and acidic residues). O-linked (GalNAc...) threonine glycosylation is found at Thr-100, Thr-101, Thr-102, Thr-107, and Thr-115. The span at 100–109 (TTTVKVVTSH) shows a compositional bias: low complexity. Over residues 110 to 132 (SVDKKTSHPNRDNAGDETQTTDK) the composition is skewed to basic and acidic residues. A helical membrane pass occupies residues 142–162 (VGIIVGVLLAIGFVGGIFIVV). Positions 143-147 (GIIVG) are requires for dimerization and lipidd rafts association. Residues 163 to 172 (MKKISGRFSP) are Cytoplasmic-facing. A requires for interaction with MSN and EZR region spans residues 164 to 165 (KK).

Belongs to the podoplanin family. In terms of assembly, homodimer. Interacts with CLEC1B; the interaction is independent of CLEC1B glycosylation and activates CLEC1B; the interaction is dependent of sialic acid on O-glycans. Interacts with CD9; this interaction is homophilic and attenuates platelet aggregation and pulmonary metastasis induced by PDPN. Interacts with LGALS8; the interaction is glycosylation-dependent; may participate in connection of the lymphatic endothelium to the surrounding extracellular matrix. Interacts with HSPA9. Interacts (via extracellular domain) with CD44; this interaction is required for PDPN-mediated directional migration and regulation of lamellipodia extension/stabilization during cell spreading and migration. Interacts (via cytoplasmic domain) with MSN and EZR; activates RHOA and promotes epithelial-mesenchymal transition. Interacts with CCL21; relocalized PDPN to the basolateral membrane. In terms of processing, extensively O-glycosylated. Contains sialic acid residues. O-glycosylation is necessary for platelet aggregation activity. Disialylated at Thr-52; sialic acid is critical for platelet-aggregating activity and for CLEC1B interaction. Post-translationally, phosphorylated by PKA; decreases cell migration. The N-terminus is blocked. In terms of tissue distribution, detected at high levels in lung and brain, at lower levels in kidney, stomach, liver, spleen and esophagus, and not detected in skin and small intestine. Expressed in epithelial cells of choroid plexus, ependyma, glomerulus and alveolus, in mesothelial cells and in endothelia of lymphatic vessels. Also expressed in stromal cells of peripheral lymphoid tissue and thymic epithelial cells. Detected in carcinoma cell lines and cultured fibroblasts. Expressed at higher levels in colon carcinomas than in normal colon tissue.

It is found in the membrane. Its subcellular location is the cell projection. The protein resides in the lamellipodium membrane. The protein localises to the filopodium membrane. It localises to the microvillus membrane. It is found in the ruffle membrane. Its subcellular location is the membrane raft. The protein resides in the apical cell membrane. The protein localises to the basolateral cell membrane. It localises to the invadopodium. Its function is as follows. Mediates effects on cell migration and adhesion through its different partners. During development plays a role in blood and lymphatic vessels separation by binding CLEC1B, triggering CLEC1B activation in platelets and leading to platelet activation and/or aggregation. Interaction with CD9, on the contrary, attenuates platelet aggregation and pulmonary metastasis induced by PDPN. Mediates effects on cell migration and adhesion through its different partners. Through MSN or EZR interaction promotes epithelial-mesenchymal transition (EMT) leading to ERZ phosphorylation and triggering RHOA activation leading to cell migration increase and invasiveness. Interaction with CD44 promotes directional cell migration in epithelial and tumor cells. In lymph nodes (LNs), controls fibroblastic reticular cells (FRCs) adhesion to the extracellular matrix (ECM) and contraction of the actomyosin by maintaining ERM proteins (EZR; MSN and RDX) and MYL9 activation through association with unknown transmembrane proteins. Engagement of CLEC1B by PDPN promotes FRCs relaxation by blocking lateral membrane interactions leading to reduction of ERM proteins (EZR; MSN and RDX) and MYL9 activation. Through binding with LGALS8 may participate in connection of the lymphatic endothelium to the surrounding extracellular matrix. In keratinocytes, induces changes in cell morphology showing an elongated shape, numerous membrane protrusions, major reorganization of the actin cytoskeleton, increased motility and decreased cell adhesion. Controls invadopodia stability and maturation leading to efficient degradation of the extracellular matrix (ECM) in tumor cells through modulation of RHOC activity in order to activate ROCK1/ROCK2 and LIMK1/LIMK2 and inactivation of CFL1. Required for normal lung cell proliferation and alveolus formation at birth. Does not function as a water channel or as a regulator of aquaporin-type water channels. Does not have any effect on folic acid or amino acid transport. This chain is Podoplanin, found in Mus musculus (Mouse).